The following is a 338-amino-acid chain: Methionine synthase (338 aa).

Zn(2+) contacts are provided by His210, Cys212, Glu234, and Cys294.

It belongs to the archaeal MetE family. Zn(2+) serves as cofactor.

It functions in the pathway amino-acid biosynthesis; L-methionine biosynthesis via de novo pathway. In terms of biological role, catalyzes the transfer of a methyl group to L-homocysteine resulting in methionine formation. The physiological methyl donor is unknown. The sequence is that of Methionine synthase from Pyrococcus furiosus (strain ATCC 43587 / DSM 3638 / JCM 8422 / Vc1).